We begin with the raw amino-acid sequence, 321 residues long: Opticin (321 aa).

Residues 1 to 19 (MKLLALLSLLILMLQEART) form the signal peptide. The residue at position 61 (Tyr61) is a Sulfotyrosine. The region spanning 105–142 (LLAAPANHGLPTCLICVCLGSSVYCDDADLENIPPLPQ) is the LRRNT domain. LRR repeat units follow at residues 143–164 (TTAY…DFKG), 167–188 (KLKR…ALRL), 191–212 (ALRD…PTSI), 237–258 (KLQF…LPLS), 259–279 (LRSL…AFCD), and 289–309 (PLED…PSAY). A disulfide bridge links Cys278 with Cys311. Asn301 carries N-linked (GlcNAc...) asparagine glycosylation.

Belongs to the small leucine-rich proteoglycan (SLRP) family. SLRP class III subfamily. In terms of assembly, homodimer. In terms of processing, O-glycosylated (sialylated oligosaccharides). Sulfated on tyrosine residues. Post-translationally, proteolytically cleaved by MMP1, MMP2, MMP3, MMP7, MMP8, MMP9, ADAMTS4, and ADAMTS5. Proteolytically cleaved by MMP13.

Its subcellular location is the secreted. It localises to the extracellular space. It is found in the extracellular matrix. Its function is as follows. Inhibits angiogenesis in the vitreous humor of the eye, and therefore represses neovascularization. Binds collagen fibrils. May be involved in collagen fiber organization via regulation of other members of the small leucine-rich repeat proteoglycan superfamily. The sequence is that of Opticin (OPTC) from Bos taurus (Bovine).